The following is a 307-amino-acid chain: Porphobilinogen deaminase (307 aa).

The residue at position 241 (Cys-241) is an S-(dipyrrolylmethanemethyl)cysteine.

This sequence belongs to the HMBS family. As to quaternary structure, monomer. Dipyrromethane is required as a cofactor.

The enzyme catalyses 4 porphobilinogen + H2O = hydroxymethylbilane + 4 NH4(+). Its pathway is porphyrin-containing compound metabolism; protoporphyrin-IX biosynthesis; coproporphyrinogen-III from 5-aminolevulinate: step 2/4. Its function is as follows. Tetrapolymerization of the monopyrrole PBG into the hydroxymethylbilane pre-uroporphyrinogen in several discrete steps. The polypeptide is Porphobilinogen deaminase (Coxiella burnetii (strain RSA 331 / Henzerling II)).